The sequence spans 859 residues: Leucine--tRNA ligase (859 aa).

The 'HIGH' region motif lies at 42–52 (PYPSGRLHMGH). Residues 618–622 (KMSKS) carry the 'KMSKS' region motif. Position 621 (K621) interacts with ATP.

Belongs to the class-I aminoacyl-tRNA synthetase family.

The protein localises to the cytoplasm. The catalysed reaction is tRNA(Leu) + L-leucine + ATP = L-leucyl-tRNA(Leu) + AMP + diphosphate. The protein is Leucine--tRNA ligase of Shewanella pealeana (strain ATCC 700345 / ANG-SQ1).